Reading from the N-terminus, the 48-residue chain is Large ribosomal subunit protein bL32 (48 aa).

The disordered stretch occupies residues 1 to 20 (MAVPDRRVSKTRAAKRRTHY). The segment covering 9 to 20 (SKTRAAKRRTHY) has biased composition (basic residues).

Belongs to the bacterial ribosomal protein bL32 family.

The protein is Large ribosomal subunit protein bL32 of Helicobacter acinonychis (strain Sheeba).